The chain runs to 129 residues: Small ribosomal subunit protein uS8 (129 aa).

It belongs to the universal ribosomal protein uS8 family. As to quaternary structure, part of the 30S ribosomal subunit.

Its function is as follows. One of the primary rRNA binding proteins, it binds directly to 16S rRNA central domain where it helps coordinate assembly of the platform of the 30S subunit. In Thermoplasma acidophilum (strain ATCC 25905 / DSM 1728 / JCM 9062 / NBRC 15155 / AMRC-C165), this protein is Small ribosomal subunit protein uS8.